The primary structure comprises 280 residues: Eukaryotic translation initiation factor 3 subunit F-1 (280 aa).

The MPN domain occupies 8–138 (VRVHPVVLFQ…LRAYVCIQLG (131 aa)).

It belongs to the eIF-3 subunit F family. In terms of assembly, component of the eukaryotic translation initiation factor 3 (eIF-3) complex. The eIF-3 complex interacts with pix.

The protein localises to the cytoplasm. In terms of biological role, component of the eukaryotic translation initiation factor 3 (eIF-3) complex, which is involved in protein synthesis of a specialized repertoire of mRNAs and, together with other initiation factors, stimulates binding of mRNA and methionyl-tRNAi to the 40S ribosome. The eIF-3 complex specifically targets and initiates translation of a subset of mRNAs involved in cell proliferation. The chain is Eukaryotic translation initiation factor 3 subunit F-1 from Drosophila virilis (Fruit fly).